Consider the following 309-residue polypeptide: Taste receptor type 2 member 8 (309 aa).

The Extracellular portion of the chain corresponds to 1 to 7 (MFSPADN). Residues 8-28 (IFIILITGEFILGILGNGYIA) traverse the membrane as a helical segment. Topologically, residues 29-50 (LVNWIDWIKKKKISTVDYILTN) are cytoplasmic. The chain crosses the membrane as a helical span at residues 51 to 71 (LVIARICLISVMVVNGIVIVL). Over 72–82 (NPDVYTKNKQQ) the chain is Extracellular. The helical transmembrane segment at 83–103 (IVIFTFWTFANYLNMWITTCL) threads the bilayer. Over 104-131 (NVFYFLKIASSSHPLFLWLKWKIDMVVH) the chain is Cytoplasmic. Residues 132–152 (WILLGCFAISLLVSLIAAIVL) form a helical membrane-spanning segment. The Extracellular segment spans residues 153-184 (SCDYRFHAIAKHKRNITEMFHVSKXPYFEPLT). N-linked (GlcNAc...) asparagine glycosylation occurs at asparagine 167. Residues 185 to 205 (LFNLFAIVPFIVSLISFFLLV) traverse the membrane as a helical segment. The Cytoplasmic segment spans residues 206–239 (RSLWRHTKQIKLYATGSRDPSTEVHVRAIKTMTS). The chain crosses the membrane as a helical span at residues 240-260 (FIFFFFLYFISSILMTFSYLM). The Extracellular segment spans residues 261–266 (TKYKLA). Residues 267–287 (VEFGEIAAILYPLGHSLILIV) traverse the membrane as a helical segment. Residues 288 to 309 (LNNKLRQIFVRMLTCRKIACVI) lie on the Cytoplasmic side of the membrane.

The protein belongs to the G-protein coupled receptor T2R family.

It is found in the membrane. Functionally, receptor that may play a role in the perception of bitterness and is gustducin-linked. May play a role in sensing the chemical composition of the gastrointestinal content. The activity of this receptor may stimulate alpha gustducin, mediate PLC-beta-2 activation and lead to the gating of TRPM5. The chain is Taste receptor type 2 member 8 (TAS2R8) from Pan paniscus (Pygmy chimpanzee).